The sequence spans 410 residues: Tegument protein VP16 homolog (410 aa).

Residues 388–410 (PPSPSEILPGDPPRPPTCGFLTR) are disordered.

Belongs to the herpesviridae tegument protein VP16 protein family. Associates with the VP16-induced complex; binding to host HCFC1 activates VP16 for association with the octamer motif-binding host protein POU2F1, to form a multiprotein-DNA complex responsible for activating transcription of the viral immediate early genes.

It is found in the virion tegument. Its subcellular location is the host nucleus. In terms of biological role, transcriptional activator of immediate-early (IE) gene products (alpha genes). Acts as a key activator of lytic infection by initiating the lytic program through the assembly of the transcriptional regulatory VP16-induced complex composed of VP16 and two cellular factors, HCFC1 and POU2F 1. VP16-induced complex represents a regulatory switch: when it is on, it promotes IE-gene expression and thus lytic infection, and when it is off, it limits IE-gene transcription favoring latent infection. Functionally, may play a role in the aggregation of tegument proteins around nucleocapsids during virus morphogenesis. This is Tegument protein VP16 homolog from Varicella-zoster virus (strain Oka vaccine) (HHV-3).